A 398-amino-acid polypeptide reads, in one-letter code: Homeobox protein knotted-1-like 1 (398 aa).

3 disordered regions span residues 43–69, 172–192, and 234–277; these read TFHL…PGTH, EFEA…DPEL, and NNNA…PRAE. The span at 49–58 shows a compositional bias: gly residues; it reads SGGGGGGGSG. The region spanning 280-300 is the ELK domain; sequence ELKNHLLRKYSGYLSSLKQEL. Positions 301 to 364 form a DNA-binding region, homeobox; TALE-type; that stretch reads SKKKKKGKLP…NQRKRHWKPS (64 aa).

It belongs to the TALE/KNOX homeobox family. As to expression, expressed only in the stems.

The protein resides in the nucleus. Functionally, probably binds to the DNA sequence 5'-TGAC-3'. This Malus domestica (Apple) protein is Homeobox protein knotted-1-like 1.